The primary structure comprises 428 residues: Major capsid protein (428 aa).

Residues 4–24 (IEELRRQRAGINEQIQALATI) adopt a coiled-coil conformation.

It belongs to the HK97 phage major capsid protein family. The scaffolding domain delta is cleaved by the viral protease and lost after assembly.

It localises to the virion. Its function is as follows. Major capsid protein that assembles to form an icosahedral capsid. This Klebsiella oxytoca (Bacteriophage phiKO2) protein is Major capsid protein.